The chain runs to 312 residues: Glyoxylate/hydroxypyruvate reductase A (312 aa).

The active site involves arginine 227. Catalysis depends on histidine 275, which acts as the Proton donor.

Belongs to the D-isomer specific 2-hydroxyacid dehydrogenase family. GhrA subfamily.

Its subcellular location is the cytoplasm. It carries out the reaction glycolate + NADP(+) = glyoxylate + NADPH + H(+). It catalyses the reaction (R)-glycerate + NAD(+) = 3-hydroxypyruvate + NADH + H(+). The enzyme catalyses (R)-glycerate + NADP(+) = 3-hydroxypyruvate + NADPH + H(+). Its function is as follows. Catalyzes the NADPH-dependent reduction of glyoxylate and hydroxypyruvate into glycolate and glycerate, respectively. The chain is Glyoxylate/hydroxypyruvate reductase A from Escherichia coli (strain SMS-3-5 / SECEC).